We begin with the raw amino-acid sequence, 432 residues long: Probable imidazolonepropionase (432 aa).

4-imidazolone-5-propanoate is bound by residues Tyr159 and His192. N-formimidoyl-L-glutamate is bound at residue Tyr159. His260 contacts Fe(3+). His260 contacts Zn(2+). Position 263 (Glu263) interacts with 4-imidazolone-5-propanoate. Asp334 lines the Fe(3+) pocket. A Zn(2+)-binding site is contributed by Asp334. An N-formimidoyl-L-glutamate-binding site is contributed by Asn336.

It belongs to the metallo-dependent hydrolases superfamily. HutI family. Requires Zn(2+) as cofactor. The cofactor is Fe(3+).

The catalysed reaction is 4-imidazolone-5-propanoate + H2O = N-formimidoyl-L-glutamate. The protein operates within amino-acid degradation; L-histidine degradation into L-glutamate; N-formimidoyl-L-glutamate from L-histidine: step 3/3. This chain is Probable imidazolonepropionase (amdhd1), found in Xenopus tropicalis (Western clawed frog).